Here is a 187-residue protein sequence, read N- to C-terminus: Elongation factor P (187 aa).

Belongs to the elongation factor P family.

The protein resides in the cytoplasm. Its pathway is protein biosynthesis; polypeptide chain elongation. In terms of biological role, involved in peptide bond synthesis. Stimulates efficient translation and peptide-bond synthesis on native or reconstituted 70S ribosomes in vitro. Probably functions indirectly by altering the affinity of the ribosome for aminoacyl-tRNA, thus increasing their reactivity as acceptors for peptidyl transferase. The chain is Elongation factor P from Rhodococcus erythropolis (strain PR4 / NBRC 100887).